We begin with the raw amino-acid sequence, 142 residues long: Large ribosomal subunit protein uL11 (142 aa).

Belongs to the universal ribosomal protein uL11 family. Part of the ribosomal stalk of the 50S ribosomal subunit. Interacts with L10 and the large rRNA to form the base of the stalk. L10 forms an elongated spine to which L12 dimers bind in a sequential fashion forming a multimeric L10(L12)X complex. Post-translationally, one or more lysine residues are methylated.

In terms of biological role, forms part of the ribosomal stalk which helps the ribosome interact with GTP-bound translation factors. In Sinorhizobium fredii (strain NBRC 101917 / NGR234), this protein is Large ribosomal subunit protein uL11.